The primary structure comprises 504 residues: ATP synthase subunit alpha (504 aa).

Position 171–178 (171–178) interacts with ATP; that stretch reads GDRATGKT.

The protein belongs to the ATPase alpha/beta chains family. In terms of assembly, F-type ATPases have 2 components, CF(1) - the catalytic core - and CF(0) - the membrane proton channel. CF(1) has five subunits: alpha(3), beta(3), gamma(1), delta(1), epsilon(1). CF(0) has three main subunits: a(1), b(2) and c(9-12). The alpha and beta chains form an alternating ring which encloses part of the gamma chain. CF(1) is attached to CF(0) by a central stalk formed by the gamma and epsilon chains, while a peripheral stalk is formed by the delta and b chains.

It localises to the cell inner membrane. It catalyses the reaction ATP + H2O + 4 H(+)(in) = ADP + phosphate + 5 H(+)(out). In terms of biological role, produces ATP from ADP in the presence of a proton gradient across the membrane. The alpha chain is a regulatory subunit. This Sulfurihydrogenibium sp. (strain YO3AOP1) protein is ATP synthase subunit alpha.